The primary structure comprises 485 residues: Ribulose bisphosphate carboxylase large chain (485 aa).

The propeptide occupies 1–2 (MS). Position 3 is an N-acetylproline (Pro3). Lys14 is subject to N6,N6,N6-trimethyllysine. Residues Asn123 and Thr173 each contribute to the substrate site. Lys175 functions as the Proton acceptor in the catalytic mechanism. Residue Lys177 participates in substrate binding. Mg(2+) is bound by residues Lys201, Asp203, and Glu204. Lys201 is modified (N6-carboxylysine). His294 (proton acceptor) is an active-site residue. Residues Arg295, His327, and Ser379 each coordinate substrate.

This sequence belongs to the RuBisCO large chain family. Type I subfamily. As to quaternary structure, heterohexadecamer of 8 large chains and 8 small chains; disulfide-linked. The disulfide link is formed within the large subunit homodimers. It depends on Mg(2+) as a cofactor. The disulfide bond which can form in the large chain dimeric partners within the hexadecamer appears to be associated with oxidative stress and protein turnover.

The protein resides in the plastid. The protein localises to the chloroplast. It carries out the reaction 2 (2R)-3-phosphoglycerate + 2 H(+) = D-ribulose 1,5-bisphosphate + CO2 + H2O. The catalysed reaction is D-ribulose 1,5-bisphosphate + O2 = 2-phosphoglycolate + (2R)-3-phosphoglycerate + 2 H(+). RuBisCO catalyzes two reactions: the carboxylation of D-ribulose 1,5-bisphosphate, the primary event in carbon dioxide fixation, as well as the oxidative fragmentation of the pentose substrate in the photorespiration process. Both reactions occur simultaneously and in competition at the same active site. The sequence is that of Ribulose bisphosphate carboxylase large chain from Bartlettina sordida (Purple torch).